Reading from the N-terminus, the 395-residue chain is Pyridinium-3,5-bisthiocarboxylic acid mononucleotide nickel insertion protein (395 aa).

It belongs to the LarC family.

It carries out the reaction Ni(II)-pyridinium-3,5-bisthiocarboxylate mononucleotide = pyridinium-3,5-bisthiocarboxylate mononucleotide + Ni(2+). In terms of biological role, involved in the biosynthesis of a nickel-pincer cofactor ((SCS)Ni(II) pincer complex). Binds Ni(2+), and functions in nickel delivery to pyridinium-3,5-bisthiocarboxylic acid mononucleotide (P2TMN), to form the mature cofactor. Is thus probably required for the activation of nickel-pincer cofactor-dependent enzymes. The chain is Pyridinium-3,5-bisthiocarboxylic acid mononucleotide nickel insertion protein from Staphylococcus epidermidis (strain ATCC 12228 / FDA PCI 1200).